A 128-amino-acid chain; its full sequence is Nanos homolog 1 (128 aa).

Positions 7 to 23 (FNSWSDYLGLSSLISRG) are essential for its translational repressor activity. The segment at 23–58 (GLQPREGGESPRPRWKASSPTPAEPLPSKAAEAHGH) is disordered. Residues 60–114 (GCGFCRSNREAQSLYSSHRLRAPDGRVLCPVLRGYTCPLCGANGDWAHTMRYCPL) form a Nanos-type zinc finger. The Zn(2+) site is built by Cys-61, Cys-64, His-77, Cys-88, Cys-96, Cys-99, His-107, and Cys-112. 2 short sequence motifs (C2HC) span residues 61 to 88 (CGFC…RVLC) and 96 to 112 (CPLC…MRYC).

It belongs to the nanos family. As to quaternary structure, interacts with ccnb1.

It localises to the cytoplasm. Its subcellular location is the perinuclear region. Functionally, acts as a translational repressor. Can mediate repression affecting different steps in the translation process: cap-driven, IRES-driven, polyadenylated RNAs or nonpolyadenylated RNAs. Essential for the development of primordial germ cells (PGCs) by ensuring their proper migration and survival. The polypeptide is Nanos homolog 1 (nanos1) (Xenopus tropicalis (Western clawed frog)).